A 665-amino-acid chain; its full sequence is Probable potassium transport system protein Kup (665 aa).

Residues 1 to 18 (MASEAPHASAPDCAPASS) show a composition bias toward low complexity. Positions 1-31 (MASEAPHASAPDCAPASSDIPQQDGGSTNGH) are disordered. The next 12 membrane-spanning stretches (helical) occupy residues 40–60 (FFAL…TSPL), 83–103 (VVSL…VVFI), 131–151 (LVFV…VITP), 171–191 (GVTN…LFFI), 202–222 (LFGP…LMNL), 245–265 (GLTG…VEAL), 281–301 (WLFF…AFAL), 332–352 (LVLL…TGAF), 380–400 (IFVP…MFTF), 409–429 (AYGL…FIVM), 435–455 (WSMP…ITFL), and 462–482 (FFSG…IMAT).

Belongs to the HAK/KUP transporter (TC 2.A.72) family.

It localises to the cell inner membrane. The catalysed reaction is K(+)(in) + H(+)(in) = K(+)(out) + H(+)(out). Transport of potassium into the cell. Likely operates as a K(+):H(+) symporter. The sequence is that of Probable potassium transport system protein Kup from Caulobacter vibrioides (strain ATCC 19089 / CIP 103742 / CB 15) (Caulobacter crescentus).